A 212-amino-acid polypeptide reads, in one-letter code: Protein-L-isoaspartate O-methyltransferase (212 aa).

Residue Ser-61 is part of the active site.

The protein belongs to the methyltransferase superfamily. L-isoaspartyl/D-aspartyl protein methyltransferase family.

The protein resides in the cytoplasm. The catalysed reaction is [protein]-L-isoaspartate + S-adenosyl-L-methionine = [protein]-L-isoaspartate alpha-methyl ester + S-adenosyl-L-homocysteine. Its function is as follows. Catalyzes the methyl esterification of L-isoaspartyl residues in peptides and proteins that result from spontaneous decomposition of normal L-aspartyl and L-asparaginyl residues. It plays a role in the repair and/or degradation of damaged proteins. The polypeptide is Protein-L-isoaspartate O-methyltransferase (Pseudoalteromonas atlantica (strain T6c / ATCC BAA-1087)).